We begin with the raw amino-acid sequence, 170 residues long: ATP synthase subunit b (170 aa).

Residues alanine 11 to isoleucine 31 form a helical membrane-spanning segment.

It belongs to the ATPase B chain family. As to quaternary structure, F-type ATPases have 2 components, F(1) - the catalytic core - and F(0) - the membrane proton channel. F(1) has five subunits: alpha(3), beta(3), gamma(1), delta(1), epsilon(1). F(0) has three main subunits: a(1), b(2) and c(10-14). The alpha and beta chains form an alternating ring which encloses part of the gamma chain. F(1) is attached to F(0) by a central stalk formed by the gamma and epsilon chains, while a peripheral stalk is formed by the delta and b chains.

The protein localises to the cell membrane. Functionally, f(1)F(0) ATP synthase produces ATP from ADP in the presence of a proton or sodium gradient. F-type ATPases consist of two structural domains, F(1) containing the extramembraneous catalytic core and F(0) containing the membrane proton channel, linked together by a central stalk and a peripheral stalk. During catalysis, ATP synthesis in the catalytic domain of F(1) is coupled via a rotary mechanism of the central stalk subunits to proton translocation. Its function is as follows. Component of the F(0) channel, it forms part of the peripheral stalk, linking F(1) to F(0). This is ATP synthase subunit b from Listeria welshimeri serovar 6b (strain ATCC 35897 / DSM 20650 / CCUG 15529 / CIP 8149 / NCTC 11857 / SLCC 5334 / V8).